The sequence spans 154 residues: uncharacterized protein (154 aa).

The HTH marR-type domain occupies 1 to 143; that stretch reads MTESERALLT…LRKLAGSLTK (143 aa). The H-T-H motif DNA-binding region spans 57-80; that stretch reads LSKLAMSLDLKPASVTRMTDILYK.

This is an uncharacterized protein from Bacillus subtilis (strain 168).